Reading from the N-terminus, the 148-residue chain is UPF0178 protein SH2212 (148 aa).

The protein belongs to the UPF0178 family.

This chain is UPF0178 protein SH2212, found in Staphylococcus haemolyticus (strain JCSC1435).